A 235-amino-acid polypeptide reads, in one-letter code: Thiamine import ATP-binding protein ThiQ (235 aa).

The region spanning leucine 2 to methionine 230 is the ABC transporter domain. Position 32 to 39 (glycine 32 to serine 39) interacts with ATP.

It belongs to the ABC transporter superfamily. Thiamine importer (TC 3.A.1.19.1) family. As to quaternary structure, the complex is composed of two ATP-binding proteins (ThiQ), two transmembrane proteins (ThiP) and a solute-binding protein (ThiB).

It is found in the cell inner membrane. It catalyses the reaction thiamine(out) + ATP + H2O = thiamine(in) + ADP + phosphate + H(+). In terms of biological role, part of the ABC transporter complex ThiBPQ involved in thiamine import. Responsible for energy coupling to the transport system. The protein is Thiamine import ATP-binding protein ThiQ of Photorhabdus laumondii subsp. laumondii (strain DSM 15139 / CIP 105565 / TT01) (Photorhabdus luminescens subsp. laumondii).